We begin with the raw amino-acid sequence, 237 residues long: tRNA (guanine-N(1)-)-methyltransferase (237 aa).

S-adenosyl-L-methionine contacts are provided by residues Gly113 and 133-138; that span reads MGDYIL.

The protein belongs to the RNA methyltransferase TrmD family. As to quaternary structure, homodimer.

It localises to the cytoplasm. It carries out the reaction guanosine(37) in tRNA + S-adenosyl-L-methionine = N(1)-methylguanosine(37) in tRNA + S-adenosyl-L-homocysteine + H(+). In terms of biological role, specifically methylates guanosine-37 in various tRNAs. In Wolinella succinogenes (strain ATCC 29543 / DSM 1740 / CCUG 13145 / JCM 31913 / LMG 7466 / NCTC 11488 / FDC 602W) (Vibrio succinogenes), this protein is tRNA (guanine-N(1)-)-methyltransferase.